The chain runs to 313 residues: Protoheme IX farnesyltransferase (313 aa).

8 helical membrane passes run Val-34–Val-54, Pro-56–Leu-76, His-105–Thr-125, Leu-128–Leu-148, Thr-152–Ser-172, Ala-173–Thr-193, Leu-243–Leu-263, and Tyr-291–Phe-311.

It belongs to the UbiA prenyltransferase family. Protoheme IX farnesyltransferase subfamily.

It is found in the cell membrane. The catalysed reaction is heme b + (2E,6E)-farnesyl diphosphate + H2O = Fe(II)-heme o + diphosphate. Its pathway is porphyrin-containing compound metabolism; heme O biosynthesis; heme O from protoheme: step 1/1. Functionally, converts heme B (protoheme IX) to heme O by substitution of the vinyl group on carbon 2 of heme B porphyrin ring with a hydroxyethyl farnesyl side group. This is Protoheme IX farnesyltransferase from Mycolicibacterium vanbaalenii (strain DSM 7251 / JCM 13017 / BCRC 16820 / KCTC 9966 / NRRL B-24157 / PYR-1) (Mycobacterium vanbaalenii).